A 553-amino-acid polypeptide reads, in one-letter code: Coiled-coil domain-containing protein 85A (553 aa).

Positions 1–28 (MSKAAGGAAAAAAAAESCSPAPAGSSAA) are enriched in low complexity. The tract at residues 1-37 (MSKAAGGAAAAAAAAESCSPAPAGSSAAPPAPVEDLS) is disordered. Coiled-coil stretches lie at residues 43 to 109 (ELLQ…RDLC) and 137 to 169 (MHKE…KELC). Disordered stretches follow at residues 203-414 (YVRD…GMNE), 433-461 (ENRM…GWGS), and 491-518 (SGAD…QPEP). Over residues 209–220 (DGSSTSSTGSTD) the composition is skewed to low complexity. A compositionally biased stretch (basic and acidic residues) spans 236–260 (HLQKPRSEGSPEHSKHRSASPEHPQ). Gly residues predominate over residues 376 to 389 (GGSGGSGGSGGGSR). A compositionally biased stretch (basic and acidic residues) spans 391–403 (GTLRRQAQEDGSP). Positions 412–443 (MNESTLSYVRQLEARVRQLEEENRMLPQASQN) form a coiled coil. The segment covering 439–455 (QASQNRRQPPTRNSSNM) has biased composition (polar residues). The segment covering 491–508 (SGADGSNSSPNSAASFSG) has biased composition (low complexity). Arginine 541 is modified (asymmetric dimethylarginine).

The protein belongs to the CCDC85 family. In terms of assembly, may interact with ARVCF; CTNND1; CTNND2 and PKP4.

It is found in the cell junction. Its subcellular location is the adherens junction. May play a role in cell-cell adhesion and epithelium development through its interaction with proteins of the beta-catenin family. The polypeptide is Coiled-coil domain-containing protein 85A (CCDC85A) (Homo sapiens (Human)).